Consider the following 37-residue polypeptide: Large ribosomal subunit protein bL36 (37 aa).

This sequence belongs to the bacterial ribosomal protein bL36 family.

The sequence is that of Large ribosomal subunit protein bL36 from Leptothrix cholodnii (strain ATCC 51168 / LMG 8142 / SP-6) (Leptothrix discophora (strain SP-6)).